The primary structure comprises 93 residues: NADH-ubiquinone oxidoreductase chain 4L (93 aa).

Helical transmembrane passes span 1–21 (MVWMKFLGVLLMSMGCFVIFR), 29–49 (LFVGLEMMSLGLLFVTHVFLM), and 54–74 (LILLILCLAVCEASICLALLV).

Belongs to the complex I subunit 4L family.

The protein localises to the mitochondrion membrane. It catalyses the reaction a ubiquinone + NADH + 5 H(+)(in) = a ubiquinol + NAD(+) + 4 H(+)(out). In terms of biological role, core subunit of the mitochondrial membrane respiratory chain NADH dehydrogenase (Complex I) that is believed to belong to the minimal assembly required for catalysis. Complex I functions in the transfer of electrons from NADH to the respiratory chain. The immediate electron acceptor for the enzyme is believed to be ubiquinone. The protein is NADH-ubiquinone oxidoreductase chain 4L (ND4L) of Mytilus edulis (Blue mussel).